Reading from the N-terminus, the 325-residue chain is Lipoyl synthase (325 aa).

The interval 1–32 is disordered; it reads MPPLADASTETLSPAEQAAVRHPEKAHRPDQP. The span at 19-32 shows a compositional bias: basic and acidic residues; sequence AVRHPEKAHRPDQP. [4Fe-4S] cluster contacts are provided by Cys66, Cys71, Cys77, Cys92, Cys96, Cys99, and Ser305. The Radical SAM core domain maps to 78–294; that stretch reads WAKKHATFMI…AEVANAKGFL (217 aa).

This sequence belongs to the radical SAM superfamily. Lipoyl synthase family. [4Fe-4S] cluster is required as a cofactor.

The protein resides in the cytoplasm. The enzyme catalyses [[Fe-S] cluster scaffold protein carrying a second [4Fe-4S](2+) cluster] + N(6)-octanoyl-L-lysyl-[protein] + 2 oxidized [2Fe-2S]-[ferredoxin] + 2 S-adenosyl-L-methionine + 4 H(+) = [[Fe-S] cluster scaffold protein] + N(6)-[(R)-dihydrolipoyl]-L-lysyl-[protein] + 4 Fe(3+) + 2 hydrogen sulfide + 2 5'-deoxyadenosine + 2 L-methionine + 2 reduced [2Fe-2S]-[ferredoxin]. It participates in protein modification; protein lipoylation via endogenous pathway; protein N(6)-(lipoyl)lysine from octanoyl-[acyl-carrier-protein]: step 2/2. In terms of biological role, catalyzes the radical-mediated insertion of two sulfur atoms into the C-6 and C-8 positions of the octanoyl moiety bound to the lipoyl domains of lipoate-dependent enzymes, thereby converting the octanoylated domains into lipoylated derivatives. This is Lipoyl synthase from Beijerinckia indica subsp. indica (strain ATCC 9039 / DSM 1715 / NCIMB 8712).